Here is a 188-residue protein sequence, read N- to C-terminus: Elongation factor P (188 aa).

Belongs to the elongation factor P family.

Its subcellular location is the cytoplasm. The protein operates within protein biosynthesis; polypeptide chain elongation. Its function is as follows. Involved in peptide bond synthesis. Stimulates efficient translation and peptide-bond synthesis on native or reconstituted 70S ribosomes in vitro. Probably functions indirectly by altering the affinity of the ribosome for aminoacyl-tRNA, thus increasing their reactivity as acceptors for peptidyl transferase. This Phenylobacterium zucineum (strain HLK1) protein is Elongation factor P.